The sequence spans 42 residues: Conotoxin Au11.6 (42 aa).

Disulfide bonds link Cys6-Cys20, Cys13-Cys25, Cys19-Cys30, and Cys24-Cys37.

This sequence belongs to the conotoxin I1 superfamily. In terms of tissue distribution, expressed by the venom duct.

It localises to the secreted. This chain is Conotoxin Au11.6, found in Conus aulicus (Princely cone).